Consider the following 1236-residue polypeptide: DNA-directed RNA polymerase subunit beta (1236 aa).

The disordered stretch occupies residues 1185–1236; it reads IEGSEDYTEPKQPNDNYLEEEENKDKESDYDEDLNFDDLTKGLQLDDFNDEH. A compositionally biased stretch (acidic residues) spans 1201–1220; it reads YLEEEENKDKESDYDEDLNF.

This sequence belongs to the RNA polymerase beta chain family. As to quaternary structure, the RNAP catalytic core consists of 2 alpha, 1 beta, 1 beta' and 1 omega subunit. When a sigma factor is associated with the core the holoenzyme is formed, which can initiate transcription.

The catalysed reaction is RNA(n) + a ribonucleoside 5'-triphosphate = RNA(n+1) + diphosphate. Its function is as follows. DNA-dependent RNA polymerase catalyzes the transcription of DNA into RNA using the four ribonucleoside triphosphates as substrates. The polypeptide is DNA-directed RNA polymerase subunit beta (Clostridium tetani (strain Massachusetts / E88)).